Here is a 288-residue protein sequence, read N- to C-terminus: G1/S-specific cyclin-D2 (288 aa).

The Cyclin N-terminal domain maps to 26–151; that stretch reads VLQNLLTIEE…VVLGKLKWNL (126 aa). Positions 264-288 are disordered; it reads DQDGSKSEDELDQASTPTDVRDIDL. Position 270 is a phosphoserine (Ser270). Thr279 is subject to Phosphothreonine.

Belongs to the cyclin family. Cyclin D subfamily. In terms of assembly, interacts with either CDK4 or CDK6 protein kinase to form a serine/threonine kinase holoenzyme complex. The cyclin subunit imparts substrate specificity to the complex. Phosphorylation at Thr-279 by MAP kinases is required for ubiquitination and degradation by the DCX(AMBRA1) complex. Post-translationally, ubiquitinated by the DCX(AMBRA1) complex during the transition from G1 to S cell phase, leading to its degradation: ubiquitination is dependent on Thr-279 phosphorylation. The DCX(AMBRA1) complex represents the major regulator of CCND2 stability during the G1/S transition. Polyubiquitinated by the SCF(FBXL2) complex, leading to proteasomal degradation.

It is found in the nucleus. It localises to the cytoplasm. The protein localises to the nucleus membrane. Regulatory component of the cyclin D2-CDK4 (DC) complex that phosphorylates and inhibits members of the retinoblastoma (RB) protein family including RB1 and regulates the cell-cycle during G(1)/S transition. Phosphorylation of RB1 allows dissociation of the transcription factor E2F from the RB/E2F complex and the subsequent transcription of E2F target genes which are responsible for the progression through the G(1) phase. Hypophosphorylates RB1 in early G(1) phase. Cyclin D-CDK4 complexes are major integrators of various mitogenenic and antimitogenic signals. This Sus scrofa (Pig) protein is G1/S-specific cyclin-D2 (CCND2).